Consider the following 244-residue polypeptide: MNIDLNADVGEGCASDSELLTLVSSANIACGFHAGDAQTMLTCVREALKNGVAFGAHPSFPDRDNFGRTAMVLPPETVYAQTLYQIGALGAIVQAQGGVMRHVKPHGMLYNQAAKDPHLAQAIAKAVHDYDPSLILVGLAGSELIRAGERHRLVTRQEVFADRGYQADGSLVPRMQPGALIHDEEQALAQTLDMVQAGRVKSVTGVWTTVTAQTVCIHGDGEYALAFARRLRAAFNARNIHVIA.

The protein belongs to the LamB/PxpA family. In terms of assembly, forms a complex composed of PxpA, PxpB and PxpC.

The catalysed reaction is 5-oxo-L-proline + ATP + 2 H2O = L-glutamate + ADP + phosphate + H(+). Its function is as follows. Catalyzes the cleavage of 5-oxoproline to form L-glutamate coupled to the hydrolysis of ATP to ADP and inorganic phosphate. This chain is 5-oxoprolinase subunit A, found in Salmonella paratyphi C (strain RKS4594).